The chain runs to 888 residues: Alanine--tRNA ligase (888 aa).

The Zn(2+) site is built by His-573, His-577, Cys-676, and His-680.

Belongs to the class-II aminoacyl-tRNA synthetase family. The cofactor is Zn(2+).

The protein resides in the cytoplasm. The catalysed reaction is tRNA(Ala) + L-alanine + ATP = L-alanyl-tRNA(Ala) + AMP + diphosphate. Catalyzes the attachment of alanine to tRNA(Ala) in a two-step reaction: alanine is first activated by ATP to form Ala-AMP and then transferred to the acceptor end of tRNA(Ala). Also edits incorrectly charged Ser-tRNA(Ala) and Gly-tRNA(Ala) via its editing domain. The sequence is that of Alanine--tRNA ligase from Corynebacterium diphtheriae (strain ATCC 700971 / NCTC 13129 / Biotype gravis).